Here is a 201-residue protein sequence, read N- to C-terminus: Small ribosomal subunit protein uS4c (201 aa).

The tract at residues Gly20–Tyr44 is disordered. One can recognise an S4 RNA-binding domain in the interval Met89–Leu152.

This sequence belongs to the universal ribosomal protein uS4 family. Part of the 30S ribosomal subunit. Contacts protein S5. The interaction surface between S4 and S5 is involved in control of translational fidelity.

The protein localises to the plastid. It localises to the chloroplast. Its function is as follows. One of the primary rRNA binding proteins, it binds directly to 16S rRNA where it nucleates assembly of the body of the 30S subunit. With S5 and S12 plays an important role in translational accuracy. In Barbarea verna (Land cress), this protein is Small ribosomal subunit protein uS4c (rps4).